Consider the following 535-residue polypeptide: Dual specificity calcium/calmodulin-dependent 3',5'-cyclic nucleotide phosphodiesterase 1B (535 aa).

A disordered region spans residues 1-21; it reads MELSPRSPPEMLESDCPSPLE. Phosphoserine is present on residues S7 and S14. Calmodulin-binding stretches follow at residues 26–46 and 117–140; these read PSKKMWIKLRSLLRYMVKQLE and EKPKFRSIVHAVQAGIFVERMFRR. One can recognise a PDEase domain in the interval 145 to 502; that stretch reads VGPTYSTAVH…QKWKERAASG (358 aa). H222 serves as the catalytic Proton donor. The Zn(2+) site is built by H226, H262, D263, and D369. Residue D263 participates in Mg(2+) binding. Disordered regions lie at residues 445–474 and 495–535; these read PLADDDSKSKSQPSFQWRQPSLDVDVGDPN and WKER…GNLD. Residues 454 to 463 show a composition bias toward polar residues; it reads KSQPSFQWRQ. Phosphoserine occurs at positions 465 and 513.

The protein belongs to the cyclic nucleotide phosphodiesterase family. PDE1 subfamily. As to quaternary structure, homodimer. The cofactor is Zn(2+). Requires Mg(2+) as cofactor.

Its subcellular location is the cytoplasm. The protein resides in the cytosol. It catalyses the reaction a nucleoside 3',5'-cyclic phosphate + H2O = a nucleoside 5'-phosphate + H(+). The enzyme catalyses 3',5'-cyclic GMP + H2O = GMP + H(+). The catalysed reaction is 3',5'-cyclic AMP + H2O = AMP + H(+). With respect to regulation, type I PDE are activated by the binding of calmodulin in the presence of Ca(2+). Cyclic nucleotide phosphodiesterase with a dual specificity for the second messengers cAMP and cGMP, which are key regulators of many important physiological processes. Has a preference for cGMP as a substrate. The chain is Dual specificity calcium/calmodulin-dependent 3',5'-cyclic nucleotide phosphodiesterase 1B from Cricetulus griseus (Chinese hamster).